The primary structure comprises 693 residues: Elongation factor G (693 aa).

The tr-type G domain maps to 8–282 (EKTRNIGIMA…AVIDYLPSPL (275 aa)). Residues 17–24 (AHVDAGKT), 81–85 (DTPGH), and 135–138 (NKMD) contribute to the GTP site.

The protein belongs to the TRAFAC class translation factor GTPase superfamily. Classic translation factor GTPase family. EF-G/EF-2 subfamily.

The protein resides in the cytoplasm. Its function is as follows. Catalyzes the GTP-dependent ribosomal translocation step during translation elongation. During this step, the ribosome changes from the pre-translocational (PRE) to the post-translocational (POST) state as the newly formed A-site-bound peptidyl-tRNA and P-site-bound deacylated tRNA move to the P and E sites, respectively. Catalyzes the coordinated movement of the two tRNA molecules, the mRNA and conformational changes in the ribosome. This chain is Elongation factor G, found in Streptococcus pneumoniae (strain ATCC 700669 / Spain 23F-1).